Reading from the N-terminus, the 350-residue chain is Renin receptor (350 aa).

The signal sequence occupies residues 1–17 (MAVLVVLLSSLVSSALA). The Extracellular segment spans residues 18–302 (NEFSILRSPG…YNLAYKYNLE (285 aa)). Residues 303–323 (YSVVFNLVLWIMTGLALAVII) traverse the membrane as a helical segment. The Cytoplasmic segment spans residues 324–350 (TSYNIWNMDPGYDSIIYRMTNQKIRMD). Positions 346–350 (KIRMD) match the Mediates retrograde transport to the ER motif.

As to quaternary structure, interacts with renin. Accessory component of the multisubunit proton-transporting vacuolar (V)-ATPase protein pump. Interacts (via N-terminus) with ATP6AP1 (via N-terminus). Interacts with ATP6V0D1; ATP6V0D1 is a V-ATPase complex subunit and the interaction promotes V-ATPase complex assembly. Interacts with TMEM9; TMEM9 is a V-ATPase assembly regulator and the interaction induces the interaction with ATP6V0D1. Interacts with VMA21 (via N-terminus); VMA21 is a V-ATPase accessory component. In terms of processing, phosphorylated. Proteolytically cleaved by a furin-like convertase in the trans-Golgi network to generate N- and C-terminal fragments. Expressed in the brain.

Its subcellular location is the endoplasmic reticulum membrane. It is found in the lysosome membrane. The protein localises to the cytoplasmic vesicle. It localises to the autophagosome membrane. The protein resides in the cell projection. Its subcellular location is the dendritic spine membrane. It is found in the axon. The protein localises to the endosome membrane. It localises to the clathrin-coated vesicle membrane. The protein resides in the secretory vesicle. Its subcellular location is the synaptic vesicle membrane. Functionally, multifunctional protein which functions as a renin, prorenin cellular receptor and is involved in the assembly of the lysosomal proton-transporting V-type ATPase (V-ATPase) and the acidification of the endo-lysosomal system. May mediate renin-dependent cellular responses by activating ERK1 and ERK2. By increasing the catalytic efficiency of renin in AGT/angiotensinogen conversion to angiotensin I, may also play a role in the renin-angiotensin system (RAS). Through its function in V-type ATPase (v-ATPase) assembly and acidification of the lysosome it regulates protein degradation and may control different signaling pathways important for proper brain development, synapse morphology and synaptic transmission. The chain is Renin receptor (Atp6ap2) from Rattus norvegicus (Rat).